We begin with the raw amino-acid sequence, 500 residues long: Glycerol kinase (500 aa).

T14 contacts ADP. Residues T14, T15, and S16 each contribute to the ATP site. T14 contacts sn-glycerol 3-phosphate. R18 is a binding site for ADP. Sn-glycerol 3-phosphate-binding residues include R84, E85, and Y136. Positions 84, 85, and 136 each coordinate glycerol. A Phosphohistidine; by HPr modification is found at H232. D246 provides a ligand contact to sn-glycerol 3-phosphate. D246 and Q247 together coordinate glycerol. Residues T268 and G311 each coordinate ADP. Positions 268, 311, 315, and 412 each coordinate ATP. ADP contacts are provided by G412 and N416.

It belongs to the FGGY kinase family. In terms of assembly, homotetramer and homodimer (in equilibrium). Post-translationally, the phosphoenolpyruvate-dependent sugar phosphotransferase system (PTS), including enzyme I, and histidine-containing protein (HPr) are required for the phosphorylation, which leads to the activation of the enzyme.

The enzyme catalyses glycerol + ATP = sn-glycerol 3-phosphate + ADP + H(+). The protein operates within polyol metabolism; glycerol degradation via glycerol kinase pathway; sn-glycerol 3-phosphate from glycerol: step 1/1. With respect to regulation, activated by phosphorylation and inhibited by fructose 1,6-bisphosphate (FBP). Functionally, key enzyme in the regulation of glycerol uptake and metabolism. Catalyzes the phosphorylation of glycerol to yield sn-glycerol 3-phosphate. The protein is Glycerol kinase of Streptococcus uberis (strain ATCC BAA-854 / 0140J).